The following is a 565-amino-acid chain: CTP synthase (565 aa).

Positions 1 to 272 (MARPKNVKHI…DLRVLKKLGL (272 aa)) are amidoligase domain. Ser-18 contributes to the CTP binding site. Ser-18 serves as a coordination point for UTP. 19 to 24 (SLGKGI) provides a ligand contact to ATP. Tyr-59 lines the L-glutamine pocket. Residue Asp-76 coordinates ATP. Mg(2+) contacts are provided by Asp-76 and Glu-146. Residues 153 to 155 (DIE), 193 to 198 (KTKPTQ), and Lys-229 each bind CTP. UTP-binding positions include 193 to 198 (KTKPTQ) and Lys-229. The 245-residue stretch at 299–543 (TIGICGKYTE…VAAAKEYAHG (245 aa)) folds into the Glutamine amidotransferase type-1 domain. Gly-363 is a binding site for L-glutamine. Cys-390 functions as the Nucleophile; for glutamine hydrolysis in the catalytic mechanism. L-glutamine is bound by residues 391 to 394 (LGMQ), Glu-414, and Arg-471. Catalysis depends on residues His-516 and Glu-518.

This sequence belongs to the CTP synthase family. Homotetramer.

The enzyme catalyses UTP + L-glutamine + ATP + H2O = CTP + L-glutamate + ADP + phosphate + 2 H(+). It carries out the reaction L-glutamine + H2O = L-glutamate + NH4(+). The catalysed reaction is UTP + NH4(+) + ATP = CTP + ADP + phosphate + 2 H(+). Its pathway is pyrimidine metabolism; CTP biosynthesis via de novo pathway; CTP from UDP: step 2/2. With respect to regulation, allosterically activated by GTP, when glutamine is the substrate; GTP has no effect on the reaction when ammonia is the substrate. The allosteric effector GTP functions by stabilizing the protein conformation that binds the tetrahedral intermediate(s) formed during glutamine hydrolysis. Inhibited by the product CTP, via allosteric rather than competitive inhibition. Functionally, catalyzes the ATP-dependent amination of UTP to CTP with either L-glutamine or ammonia as the source of nitrogen. Regulates intracellular CTP levels through interactions with the four ribonucleotide triphosphates. The polypeptide is CTP synthase (Pelodictyon phaeoclathratiforme (strain DSM 5477 / BU-1)).